A 541-amino-acid polypeptide reads, in one-letter code: Glucose-6-phosphate isomerase (541 aa).

Glu-346 serves as the catalytic Proton donor. Active-site residues include His-377 and Lys-506.

It belongs to the GPI family.

It is found in the cytoplasm. It carries out the reaction alpha-D-glucose 6-phosphate = beta-D-fructose 6-phosphate. It functions in the pathway carbohydrate biosynthesis; gluconeogenesis. It participates in carbohydrate degradation; glycolysis; D-glyceraldehyde 3-phosphate and glycerone phosphate from D-glucose: step 2/4. Its function is as follows. Catalyzes the reversible isomerization of glucose-6-phosphate to fructose-6-phosphate. The protein is Glucose-6-phosphate isomerase of Sinorhizobium medicae (strain WSM419) (Ensifer medicae).